Consider the following 256-residue polypeptide: NH(3)-dependent NAD(+) synthetase (256 aa).

Residue G29 to S36 participates in ATP binding. A Mg(2+)-binding site is contributed by D35. R115 is a deamido-NAD(+) binding site. T135 is an ATP binding site. Residue E140 coordinates Mg(2+). 2 residues coordinate deamido-NAD(+): K148 and D155. K164 and S186 together coordinate ATP. H245–K246 lines the deamido-NAD(+) pocket.

The protein belongs to the NAD synthetase family. As to quaternary structure, homodimer.

The enzyme catalyses deamido-NAD(+) + NH4(+) + ATP = AMP + diphosphate + NAD(+) + H(+). The protein operates within cofactor biosynthesis; NAD(+) biosynthesis; NAD(+) from deamido-NAD(+) (ammonia route): step 1/1. In terms of biological role, catalyzes the ATP-dependent amidation of deamido-NAD to form NAD. Uses ammonia as a nitrogen source. This is NH(3)-dependent NAD(+) synthetase from Methanosarcina mazei (strain ATCC BAA-159 / DSM 3647 / Goe1 / Go1 / JCM 11833 / OCM 88) (Methanosarcina frisia).